The sequence spans 336 residues: 3-isopropylmalate dehydrogenase (336 aa).

4 residues coordinate substrate: R87, R97, R121, and D211. The Mg(2+) site is built by D211, D235, and D239. Position 271-283 (271-283 (GSAPDIAGQGIAD)) interacts with NAD(+).

It belongs to the isocitrate and isopropylmalate dehydrogenases family. LeuB type 2 subfamily. Homodimer. Mg(2+) serves as cofactor. The cofactor is Mn(2+).

The protein resides in the cytoplasm. The catalysed reaction is (2R,3S)-3-isopropylmalate + NAD(+) = 4-methyl-2-oxopentanoate + CO2 + NADH. Its pathway is amino-acid biosynthesis; L-leucine biosynthesis; L-leucine from 3-methyl-2-oxobutanoate: step 3/4. Functionally, catalyzes the oxidation of 3-carboxy-2-hydroxy-4-methylpentanoate (3-isopropylmalate) to 3-carboxy-4-methyl-2-oxopentanoate. The product decarboxylates to 4-methyl-2 oxopentanoate. This is 3-isopropylmalate dehydrogenase from Mycobacterium leprae (strain Br4923).